Reading from the N-terminus, the 414-residue chain is Enolase (414 aa).

Gln-162 contributes to the (2R)-2-phosphoglycerate binding site. Glu-204 functions as the Proton donor in the catalytic mechanism. Residues Asp-239, Glu-280, and Asp-307 each coordinate Mg(2+). Residues Lys-332, Arg-361, Ser-362, and Lys-383 each contribute to the (2R)-2-phosphoglycerate site. The active-site Proton acceptor is Lys-332.

This sequence belongs to the enolase family. The cofactor is Mg(2+).

Its subcellular location is the cytoplasm. The protein localises to the secreted. The protein resides in the cell surface. It carries out the reaction (2R)-2-phosphoglycerate = phosphoenolpyruvate + H2O. Its pathway is carbohydrate degradation; glycolysis; pyruvate from D-glyceraldehyde 3-phosphate: step 4/5. Its function is as follows. Catalyzes the reversible conversion of 2-phosphoglycerate (2-PG) into phosphoenolpyruvate (PEP). It is essential for the degradation of carbohydrates via glycolysis. In Campylobacter jejuni (strain RM1221), this protein is Enolase.